The sequence spans 192 residues: Ion-translocating oxidoreductase complex subunit B (192 aa).

Residues 1 to 26 (MSAVWIAVIAISLLGLIFGLILGYAS) are hydrophobic. The 60-residue stretch at 32–91 (QDDPVVEKIDELLPQSQCGQCGYPGCRPYAEAVGAQGEKINRCAPGGEAVMLKIAALLNV) folds into the 4Fe-4S domain. [4Fe-4S] cluster is bound by residues Cys49, Cys52, Cys57, Cys74, Cys117, Cys120, Cys123, Cys127, Cys147, Cys150, Cys153, and Cys157. 4Fe-4S ferredoxin-type domains lie at 108–137 (MLAV…GATR) and 138–167 (AMHT…LVPV).

This sequence belongs to the 4Fe4S bacterial-type ferredoxin family. RnfB subfamily. In terms of assembly, the complex is composed of six subunits: RnfA, RnfB, RnfC, RnfD, RnfE and RnfG. [4Fe-4S] cluster serves as cofactor.

Its subcellular location is the cell inner membrane. Its function is as follows. Part of a membrane-bound complex that couples electron transfer with translocation of ions across the membrane. This chain is Ion-translocating oxidoreductase complex subunit B, found in Klebsiella pneumoniae (strain 342).